A 505-amino-acid polypeptide reads, in one-letter code: Cysteine--tRNA ligase (505 aa).

C33 contributes to the Zn(2+) binding site. Positions 35–45 match the 'HIGH' region motif; it reads PTVYDFAHIGN. C229, H268, and E272 together coordinate Zn(2+). The 'KMSKS' region motif lies at 301-305; sequence KMSKS. K304 is an ATP binding site.

The protein belongs to the class-I aminoacyl-tRNA synthetase family. Monomer. Zn(2+) serves as cofactor.

Its subcellular location is the cytoplasm. The enzyme catalyses tRNA(Cys) + L-cysteine + ATP = L-cysteinyl-tRNA(Cys) + AMP + diphosphate. This Brucella anthropi (strain ATCC 49188 / DSM 6882 / CCUG 24695 / JCM 21032 / LMG 3331 / NBRC 15819 / NCTC 12168 / Alc 37) (Ochrobactrum anthropi) protein is Cysteine--tRNA ligase.